The chain runs to 47 residues: MKKRSVSGCNITILAVVFSHLSAGNSPCGNQANVLCISRLEFVQYQS.

An N-terminal signal peptide occupies residues Met-1–Gly-24.

Expressed in Peyer patches, spleen, thymus, liver and mesenteric lymph node. Expressed at high levels by dendritic cells, and at lower levels by T-cells, monocytes and B-cells.

It is found in the secreted. In terms of biological role, enhances IgA secretion from B-cells stimulated via CD40. The sequence is that of IgA-inducing protein (IGIP) from Bos taurus (Bovine).